Here is a 288-residue protein sequence, read N- to C-terminus: Hemin import ATP-binding protein HmuV (288 aa).

The ABC transporter domain maps to 31 to 269; that stretch reads LRARGLVVER…DLLTRVYQHP (239 aa). 68-75 contacts ATP; it reads GPNGAGKS.

This sequence belongs to the ABC transporter superfamily. Heme (hemin) importer (TC 3.A.1.14.5) family. As to quaternary structure, the complex is composed of two ATP-binding proteins (HmuV), two transmembrane proteins (HmuU) and a solute-binding protein (HmuT).

The protein localises to the cell membrane. Its function is as follows. Part of the ABC transporter complex HmuTUV involved in hemin import. Responsible for energy coupling to the transport system. In Nocardia farcinica (strain IFM 10152), this protein is Hemin import ATP-binding protein HmuV.